The sequence spans 89 residues: Small ribosomal subunit protein uS15 (89 aa).

Residues 1-21 show a composition bias toward basic and acidic residues; that stretch reads MSITPERKQEMIKDYATKEGD. The interval 1–23 is disordered; that stretch reads MSITPERKQEMIKDYATKEGDTG.

The protein belongs to the universal ribosomal protein uS15 family. As to quaternary structure, part of the 30S ribosomal subunit. Forms a bridge to the 50S subunit in the 70S ribosome, contacting the 23S rRNA.

Functionally, one of the primary rRNA binding proteins, it binds directly to 16S rRNA where it helps nucleate assembly of the platform of the 30S subunit by binding and bridging several RNA helices of the 16S rRNA. Forms an intersubunit bridge (bridge B4) with the 23S rRNA of the 50S subunit in the ribosome. This is Small ribosomal subunit protein uS15 from Rhodospirillum rubrum (strain ATCC 11170 / ATH 1.1.1 / DSM 467 / LMG 4362 / NCIMB 8255 / S1).